The primary structure comprises 286 residues: Acetylglutamate kinase (286 aa).

Substrate-binding positions include 69-70, arginine 91, and asparagine 185; that span reads GG.

This sequence belongs to the acetylglutamate kinase family. ArgB subfamily.

Its subcellular location is the cytoplasm. The enzyme catalyses N-acetyl-L-glutamate + ATP = N-acetyl-L-glutamyl 5-phosphate + ADP. It functions in the pathway amino-acid biosynthesis; L-arginine biosynthesis; N(2)-acetyl-L-ornithine from L-glutamate: step 2/4. Catalyzes the ATP-dependent phosphorylation of N-acetyl-L-glutamate. The polypeptide is Acetylglutamate kinase (Chlorobium chlorochromatii (strain CaD3)).